A 201-amino-acid chain; its full sequence is Syndecan-2 (201 aa).

An N-terminal signal peptide occupies residues 1-18 (MRRAWILLTLGLVACVSA). Over 19–144 (ESRAELTSDK…HSDSLFKRTE (126 aa)) the chain is Extracellular. O-linked (Xyl...) (glycosaminoglycan) serine glycans are attached at residues Ser-41, Ser-55, and Ser-57. Disordered regions lie at residues 42–70 (GVYP…ELTT) and 90–130 (TLNI…DTNV). Residues 90–102 (TLNIQNKIPAQTK) show a composition bias toward polar residues. Residue Thr-101 is glycosylated (O-linked (GalNAc...) threonine). Basic and acidic residues predominate over residues 103-123 (SPEETDKEKVHLSDSERKMDP). Position 115 is a phosphoserine; by FAM20C (Ser-115). A helical transmembrane segment spans residues 145–169 (VLAAVIAGGVIGFLFAIFLILLLVY). The Cytoplasmic portion of the chain corresponds to 170–201 (RMRKKDEGSYDLGERKPSSAAYQKAPTKEFYA). A disordered region spans residues 178-201 (SYDLGERKPSSAAYQKAPTKEFYA). Residue Ser-187 is modified to Phosphoserine.

Belongs to the syndecan proteoglycan family. Interacts (via cytoplasmic domain) with SARM1. Forms a complex with SDCBP and PDCD6IP. Post-translationally, O-glycosylated with core 1 or possibly core 8 glycans. Contains heparan sulfate. Also contains chondroitin sulfate.

It is found in the membrane. Its function is as follows. Cell surface proteoglycan which regulates dendritic arbor morphogenesis. The protein is Syndecan-2 (SDC2) of Homo sapiens (Human).